Here is a 324-residue protein sequence, read N- to C-terminus: UDP-N-acetylenolpyruvoylglucosamine reductase (324 aa).

Residues 36-203 (FRAGGLAELM…THAIFEGFPE (168 aa)) enclose the FAD-binding PCMH-type domain. R183 is an active-site residue. S232 (proton donor) is an active-site residue. Residue E302 is part of the active site.

Belongs to the MurB family. It depends on FAD as a cofactor.

Its subcellular location is the cytoplasm. It catalyses the reaction UDP-N-acetyl-alpha-D-muramate + NADP(+) = UDP-N-acetyl-3-O-(1-carboxyvinyl)-alpha-D-glucosamine + NADPH + H(+). It participates in cell wall biogenesis; peptidoglycan biosynthesis. Its function is as follows. Cell wall formation. This Sinorhizobium fredii (strain NBRC 101917 / NGR234) protein is UDP-N-acetylenolpyruvoylglucosamine reductase.